The primary structure comprises 410 residues: Metacaspase-1 (410 aa).

Residues 1 to 94 are disordered; that stretch reads MFPGSGRQTY…RQSGAMNDVS (94 aa). Composition is skewed to low complexity over residues 21-47 and 55-64; these read APQY…YNGP and NYNYGHYGPP. Gly residues predominate over residues 65-75; that stretch reads QGQGQGYGQGG. Polar residues predominate over residues 80–94; the sequence is MYNNNRQSGAMNDVS. Residues histidine 200 and cysteine 256 contribute to the active site.

This sequence belongs to the peptidase C14B family.

Involved in cell death (apoptosis). The polypeptide is Metacaspase-1 (MCA1) (Meyerozyma guilliermondii (strain ATCC 6260 / CBS 566 / DSM 6381 / JCM 1539 / NBRC 10279 / NRRL Y-324) (Yeast)).